Consider the following 422-residue polypeptide: Fasciclin-like arabinogalactan protein 10 (422 aa).

The signal sequence occupies residues 1–25 (MATSRAFTLFAFTLSLLTVASTVSG). FAS1 domains follow at residues 26–172 (HNIT…NAPI) and 187–327 (GVSN…DNVL). N-linked (GlcNAc...) asparagine glycosylation is found at Asn-27, Asn-128, Asn-162, Asn-190, and Asn-244. Residues 336–397 (SSSPAPAPEP…PTSSENSNAK (62 aa)) form a disordered region. A compositionally biased stretch (pro residues) spans 340–374 (APAPEPVSAPTPTPAKSPSPVEAPSPTAASPPAPP). The span at 386–397 (DSPTSSENSNAK) shows a compositional bias: polar residues. Residue Asn-398 is the site of GPI-anchor amidated asparagine attachment. The propeptide at 399–422 (AAFHVNAPALFTALVTIAATSLLL) is removed in mature form.

It belongs to the fasciclin-like AGP family.

It localises to the cell membrane. Functionally, may be a cell surface adhesion protein. The chain is Fasciclin-like arabinogalactan protein 10 (FLA10) from Arabidopsis thaliana (Mouse-ear cress).